A 105-amino-acid chain; its full sequence is Large ribosomal subunit protein uL24 (105 aa).

This sequence belongs to the universal ribosomal protein uL24 family. Part of the 50S ribosomal subunit.

Functionally, one of two assembly initiator proteins, it binds directly to the 5'-end of the 23S rRNA, where it nucleates assembly of the 50S subunit. One of the proteins that surrounds the polypeptide exit tunnel on the outside of the subunit. The sequence is that of Large ribosomal subunit protein uL24 from Mycobacterium leprae (strain Br4923).